The following is a 149-amino-acid chain: Envelope glycoprotein UL4 (149 aa).

Positions 1-18 (MMLRTWISLPMVLLDAYC) are cleaved as a signal peptide. N-linked (GlcNAc...) asparagine; by host glycans are attached at residues Asn-46, Asn-51, Asn-59, Asn-67, Asn-105, Asn-109, Asn-119, Asn-136, and Asn-145.

The protein belongs to the RL11 family. In terms of processing, N-glycosylated and possibly O-glycosylated.

Its subcellular location is the virion membrane. This chain is Envelope glycoprotein UL4 (UL4), found in Human cytomegalovirus (strain Merlin) (HHV-5).